The sequence spans 62 residues: Photosystem II reaction center protein Z (62 aa).

2 helical membrane passes run 8–28 (AVFALIVTSSILLISVPVVFA) and 41–61 (FSGTSLWIGLVFLVGILNSLI).

The protein belongs to the PsbZ family. In terms of assembly, PSII is composed of 1 copy each of membrane proteins PsbA, PsbB, PsbC, PsbD, PsbE, PsbF, PsbH, PsbI, PsbJ, PsbK, PsbL, PsbM, PsbT, PsbY, PsbZ, Psb30/Ycf12, at least 3 peripheral proteins of the oxygen-evolving complex and a large number of cofactors. It forms dimeric complexes.

The protein resides in the plastid. It is found in the chloroplast thylakoid membrane. Functionally, may control the interaction of photosystem II (PSII) cores with the light-harvesting antenna, regulates electron flow through the 2 photosystem reaction centers. PSII is a light-driven water plastoquinone oxidoreductase, using light energy to abstract electrons from H(2)O, generating a proton gradient subsequently used for ATP formation. In Cucumis sativus (Cucumber), this protein is Photosystem II reaction center protein Z.